Consider the following 462-residue polypeptide: tRNA modification GTPase MnmE (462 aa).

Residues arginine 27, glutamate 89, and arginine 128 each contribute to the (6S)-5-formyl-5,6,7,8-tetrahydrofolate site. The region spanning 224-383 is the TrmE-type G domain; it reads GLATAIVGRP…LDERIAKLFF (160 aa). Asparagine 234 serves as a coordination point for K(+). GTP contacts are provided by residues 234–239, 253–259, and 278–281; these read NVGKSS, TDVAGTT, and DTAG. Serine 238 contacts Mg(2+). Residues threonine 253, valine 255, and threonine 258 each coordinate K(+). Residue threonine 259 coordinates Mg(2+). Lysine 462 contacts (6S)-5-formyl-5,6,7,8-tetrahydrofolate.

Belongs to the TRAFAC class TrmE-Era-EngA-EngB-Septin-like GTPase superfamily. TrmE GTPase family. Homodimer. Heterotetramer of two MnmE and two MnmG subunits. It depends on K(+) as a cofactor.

The protein localises to the cytoplasm. Its function is as follows. Exhibits a very high intrinsic GTPase hydrolysis rate. Involved in the addition of a carboxymethylaminomethyl (cmnm) group at the wobble position (U34) of certain tRNAs, forming tRNA-cmnm(5)s(2)U34. This Lacticaseibacillus paracasei (strain ATCC 334 / BCRC 17002 / CCUG 31169 / CIP 107868 / KCTC 3260 / NRRL B-441) (Lactobacillus paracasei) protein is tRNA modification GTPase MnmE.